Reading from the N-terminus, the 188-residue chain is Chitin synthase 2 (188 aa).

Belongs to the chitin synthase family.

It is found in the cell membrane. It carries out the reaction [(1-&gt;4)-N-acetyl-beta-D-glucosaminyl](n) + UDP-N-acetyl-alpha-D-glucosamine = [(1-&gt;4)-N-acetyl-beta-D-glucosaminyl](n+1) + UDP + H(+). Functionally, polymerizes chitin, a structural polymer of the cell wall and septum, by transferring the sugar moiety of UDP-GlcNAc to the non-reducing end of the growing chitin polymer. This chain is Chitin synthase 2 (CHS2), found in Exophiala jeanselmei (Dematiaceous fungus).